A 77-amino-acid polypeptide reads, in one-letter code: uncharacterized protein (77 aa).

The chain crosses the membrane as a helical span at residues 36–52 (FYQLILKVLSALLLLSV).

Its subcellular location is the membrane. This is an uncharacterized protein from Saccharomyces cerevisiae (strain ATCC 204508 / S288c) (Baker's yeast).